Here is a 592-residue protein sequence, read N- to C-terminus: Arginine--tRNA ligase (592 aa).

The 'HIGH' region motif lies at 112-122 (VNPNKELHVGH).

This sequence belongs to the class-I aminoacyl-tRNA synthetase family. Monomer.

The protein localises to the cytoplasm. The enzyme catalyses tRNA(Arg) + L-arginine + ATP = L-arginyl-tRNA(Arg) + AMP + diphosphate. This is Arginine--tRNA ligase from Thermus thermophilus (strain ATCC 27634 / DSM 579 / HB8).